The following is a 133-amino-acid chain: Peptide methionine sulfoxide reductase MsrB (133 aa).

Over residues 1 to 12 the composition is skewed to basic and acidic residues; the sequence is MSEKVQKSEHEW. A disordered region spans residues 1–36; sequence MSEKVQKSEHEWQQQLTPEQYRVTREKGTERPFTGD. In terms of domain architecture, MsrB spans 9–132; sequence EHEWQQQLTP…NSVSLDFHPG (124 aa). Residues cysteine 48, cysteine 51, cysteine 97, and cysteine 100 each contribute to the Zn(2+) site. The active-site Nucleophile is cysteine 121.

The protein belongs to the MsrB Met sulfoxide reductase family. It depends on Zn(2+) as a cofactor.

It carries out the reaction L-methionyl-[protein] + [thioredoxin]-disulfide + H2O = L-methionyl-(R)-S-oxide-[protein] + [thioredoxin]-dithiol. The polypeptide is Peptide methionine sulfoxide reductase MsrB (Chromohalobacter salexigens (strain ATCC BAA-138 / DSM 3043 / CIP 106854 / NCIMB 13768 / 1H11)).